Here is a 474-residue protein sequence, read N- to C-terminus: MFS transporter SAT21 (474 aa).

The next 6 helical transmembrane spans lie at 7–27, 64–84, 101–121, 131–151, 162–182, and 189–209; these read LVLP…LEVP, LVVG…ILYF, CVGY…HQVF, LFLF…AFVA, FLFL…ALAT, and LFLP…LLQM. A disordered region spans residues 220–252; it reads KVVGSTSDQTEPFLRSSSNSSQESGTAAPAIDP. Polar residues predominate over residues 222 to 244; it reads VGSTSDQTEPFLRSSSNSSQESG. Residue N238 is glycosylated (N-linked (GlcNAc...) asparagine). The next 6 helical transmembrane spans lie at 276 to 296, 315 to 335, 346 to 366, 374 to 394, 406 to 426, and 445 to 465; these read FICY…AFIF, LALS…ANAT, INIG…IMAW, FIFS…LQGV, SIFA…GPLM, and FLAS…LWAL.

It belongs to the major facilitator superfamily.

The protein resides in the cell membrane. Functionally, MFS transporter; part of the satratoxin SC3 cluster involved in the biosynthesis of satratoxins, trichothecene mycotoxins that are associated with human food poisonings. Satratoxins are suggested to be made by products of multiple gene clusters (SC1, SC2 and SC3) that encode 21 proteins in all, including polyketide synthases, acetyltransferases, and other enzymes expected to modify the trichothecene skeleton. SC1 encodes 10 proteins, SAT1 to SAT10. The largest are SAT8, which encodes a putative polyketide synthase (PKS) with a conventional non-reducing architecture, and SAT10, a putative protein containing four ankyrin repeats and thus may be involved in protein scaffolding. The putative short-chain reductase SAT3 may assist the PKS in some capacity. SAT6 contains a secretory lipase domain and acts probably as a trichothecene esterase. SAT5 encodes a putative acetyltransferase, and so, with SAT6, may affect endogenous protection from toxicity. The probable transcription factor SAT9 may regulate the expression of the SC1 cluster. SC2 encodes proteins SAT11 to SAT16, the largest of which encodes the putative reducing PKS SAT13. SAT11 is a cytochrome P450 monooxygenase, while SAT14 and SAT16 are probable acetyltransferases. The SC2 cluster may be regulated by the transcription factor SAT15. SC3 is a small cluster that encodes 5 proteins, SAT17 to SAT21. SAT21 is a putative MFS-type transporter which may have a role in exporting secondary metabolites. The four other proteins putatively encoded in SC3 include the taurine hydroxylase-like protein SAT17, the O-methyltransferase SAT18, the acetyltransferase SAT19, and the Cys6-type zinc finger SAT20, the latter being probably involved in regulation of SC3 expression. This chain is MFS transporter SAT21, found in Stachybotrys chartarum (strain CBS 109288 / IBT 7711) (Toxic black mold).